We begin with the raw amino-acid sequence, 522 residues long: Serine/threonine-protein kinase BSK1-2 (522 aa).

A disordered region spans residues 1–54 (MGCCGSSLRVGSHAPEKPPRRARPPPPPPQPHHPRRPSFTLNAHQAAASSSAAS). The N-myristoyl glycine moiety is linked to residue Gly-2. A Protein kinase domain is found at 79–338 (ANIVSESGEK…KLVSILQPLQ (260 aa)). Residues 85-93 (SGEKAPNLV) and Lys-111 each bind ATP. Asp-205 functions as the Proton acceptor in the catalytic mechanism.

It belongs to the protein kinase superfamily. Ser/Thr protein kinase family.

Its subcellular location is the cell membrane. It catalyses the reaction L-seryl-[protein] + ATP = O-phospho-L-seryl-[protein] + ADP + H(+). It carries out the reaction L-threonyl-[protein] + ATP = O-phospho-L-threonyl-[protein] + ADP + H(+). Its function is as follows. Probable serine/threonine kinase that functions as a positive regulator of plant immunity. May be involved in the regulation of pattern-triggered immunity (PTI). Does not seem to be involved in responses to brassinosteroid (BR) signaling. This Oryza sativa subsp. japonica (Rice) protein is Serine/threonine-protein kinase BSK1-2.